A 116-amino-acid chain; its full sequence is Large ribosomal subunit protein bL19 (116 aa).

It belongs to the bacterial ribosomal protein bL19 family.

Functionally, this protein is located at the 30S-50S ribosomal subunit interface and may play a role in the structure and function of the aminoacyl-tRNA binding site. This is Large ribosomal subunit protein bL19 from Nocardioides sp. (strain ATCC BAA-499 / JS614).